Here is a 455-residue protein sequence, read N- to C-terminus: Glutamyl-tRNA reductase (455 aa).

Substrate-binding positions include 49–52 (TCNR), S109, 114–116 (EAQ), and Q120. Residue C50 is the Nucleophile of the active site. 190–195 (GAGAMG) serves as a coordination point for NADP(+).

This sequence belongs to the glutamyl-tRNA reductase family. In terms of assembly, homodimer.

It carries out the reaction (S)-4-amino-5-oxopentanoate + tRNA(Glu) + NADP(+) = L-glutamyl-tRNA(Glu) + NADPH + H(+). It functions in the pathway porphyrin-containing compound metabolism; protoporphyrin-IX biosynthesis; 5-aminolevulinate from L-glutamyl-tRNA(Glu): step 1/2. Catalyzes the NADPH-dependent reduction of glutamyl-tRNA(Glu) to glutamate 1-semialdehyde (GSA). The sequence is that of Glutamyl-tRNA reductase from Salinispora arenicola (strain CNS-205).